Consider the following 291-residue polypeptide: Acetyl-coenzyme A carboxylase carboxyl transferase subunit beta (291 aa).

Residues 29-291 (IMTKCPDCKK…TGGDLEWLEN (263 aa)) enclose the CoA carboxyltransferase N-terminal domain. Zn(2+) is bound by residues Cys33, Cys36, Cys52, and Cys55. The segment at 33–55 (CPDCKKIMLTKELDKNLRVCMNC) adopts a C4-type zinc-finger fold.

This sequence belongs to the AccD/PCCB family. Acetyl-CoA carboxylase is a heterohexamer composed of biotin carboxyl carrier protein (AccB), biotin carboxylase (AccC) and two subunits each of ACCase subunit alpha (AccA) and ACCase subunit beta (AccD). The cofactor is Zn(2+).

The protein localises to the cytoplasm. It catalyses the reaction N(6)-carboxybiotinyl-L-lysyl-[protein] + acetyl-CoA = N(6)-biotinyl-L-lysyl-[protein] + malonyl-CoA. It functions in the pathway lipid metabolism; malonyl-CoA biosynthesis; malonyl-CoA from acetyl-CoA: step 1/1. Functionally, component of the acetyl coenzyme A carboxylase (ACC) complex. Biotin carboxylase (BC) catalyzes the carboxylation of biotin on its carrier protein (BCCP) and then the CO(2) group is transferred by the transcarboxylase to acetyl-CoA to form malonyl-CoA. This chain is Acetyl-coenzyme A carboxylase carboxyl transferase subunit beta, found in Bacillus licheniformis (strain ATCC 14580 / DSM 13 / JCM 2505 / CCUG 7422 / NBRC 12200 / NCIMB 9375 / NCTC 10341 / NRRL NRS-1264 / Gibson 46).